A 459-amino-acid chain; its full sequence is Cysteine--tRNA ligase (459 aa).

Cysteine 28 contacts Zn(2+). The 'HIGH' region signature appears at 30–40 (VTIYDLCHIGH). Cysteine 209, histidine 234, and glutamate 238 together coordinate Zn(2+). The 'KMSKS' region signature appears at 266–270 (KMSKS). Residue lysine 269 coordinates ATP.

Belongs to the class-I aminoacyl-tRNA synthetase family. As to quaternary structure, monomer. It depends on Zn(2+) as a cofactor.

Its subcellular location is the cytoplasm. It catalyses the reaction tRNA(Cys) + L-cysteine + ATP = L-cysteinyl-tRNA(Cys) + AMP + diphosphate. The polypeptide is Cysteine--tRNA ligase (Vibrio cholerae serotype O1 (strain ATCC 39541 / Classical Ogawa 395 / O395)).